Reading from the N-terminus, the 1691-residue chain is Collagen alpha-6(IV) chain (1691 aa).

Positions 1–22 (MLINKLWLLLVTLCLTEELAAA) are cleaved as a signal peptide. Positions 23–46 (GEKSYGKPCGGQDCSGSCQCFPEK) are 7S domain. Residues 47–1463 (GARGRPGPIG…FGMPGMPGQS (1417 aa)) form a triple-helical region region. Disordered stretches follow at residues 108-338 (IPGH…EGQK), 404-473 (GFPG…LGLK), 486-881 (GGVP…KGSP), 915-1099 (GIPG…KGRD), and 1185-1459 (THGT…MPGM). Asn-127 is a glycosylation site (N-linked (GlcNAc...) asparagine). Low complexity predominate over residues 185 to 197 (PQGAPGFPGAVGP). A compositionally biased stretch (pro residues) spans 198-213 (AGPPGLQGPPGPPGPL). Low complexity-rich tracts occupy residues 311–320 (QGPPGQQGKK) and 421–431 (GAAGLPGRDGL). 2 stretches are compositionally biased toward pro residues: residues 432 to 443 (PGPPGPPGPPSP) and 491 to 502 (TGPPGEPGPPGP). Residues 503-512 (WGLIGLPGLK) are compositionally biased toward low complexity. The Cell attachment site signature appears at 515-517 (RGD). Residues 526-541 (PAGAPGLVGPLGPSGP) are compositionally biased toward low complexity. The Cell attachment site signature appears at 560-562 (RGD). Gly residues predominate over residues 588–599 (GLPGDGGQGFPG). Composition is skewed to low complexity over residues 641–652 (LPGQQGLPGSKG), 660–703 (PGSY…GSPG), 722–735 (LPGFPGLPGKDGLP), and 802–820 (SPGTPGQVGQPGTPGSSGP). Basic residues predominate over residues 842 to 851 (PGKKGTRGKK). Positions 853 to 878 (PPGSIVKKGLPGLKGLPGNPGLVGLK) are enriched in low complexity. A Cell attachment site motif is present at residues 986–988 (RGD). Residues 1055 to 1068 (SPGLPGASGLPGLK) are compositionally biased toward low complexity. The segment covering 1210-1220 (GYPGIGIGAPG) has biased composition (gly residues). Over residues 1234–1253 (PGLQGPAGLPGAPGISLPSL) the composition is skewed to low complexity. Positions 1275–1284 (PAGPPGPPGP) are enriched in pro residues. Polar residues predominate over residues 1360–1371 (SGLQGDPGQTPT). 2 stretches are compositionally biased toward low complexity: residues 1384–1397 (LPGIDGIPGLTGDP) and 1429–1459 (ALGDPGLPGLQGPPGFEGAPGQQGPFGMPGM). The Collagen IV NC1 domain occupies 1467-1691 (GYTLVKHSQS…SRCQVCMKSL (225 aa)). 6 disulfide bridges follow: Cys-1482-Cys-1571, Cys-1515-Cys-1568, Cys-1527-Cys-1533, Cys-1590-Cys-1687, Cys-1624-Cys-1684, and Cys-1636-Cys-1643.

It belongs to the type IV collagen family. In terms of assembly, there are six type IV collagen isoforms, alpha 1(IV)-alpha 6(IV), each of which can form a triple helix structure with 2 other chains to generate type IV collagen network. In terms of processing, prolines at the third position of the tripeptide repeating unit (G-X-Y) are hydroxylated in some or all of the chains. Post-translationally, type IV collagens contain numerous cysteine residues which are involved in inter- and intramolecular disulfide bonding. 12 of these, located in the NC1 domain, are conserved in all known type IV collagens. The trimeric structure of the NC1 domains is stabilized by covalent bonds between Lys and Met residues.

It localises to the secreted. The protein localises to the extracellular space. Its subcellular location is the extracellular matrix. The protein resides in the basement membrane. In terms of biological role, type IV collagen is the major structural component of glomerular basement membranes (GBM), forming a 'chicken-wire' meshwork together with laminins, proteoglycans and entactin/nidogen. This chain is Collagen alpha-6(IV) chain (COL4A6), found in Homo sapiens (Human).